Here is a 316-residue protein sequence, read N- to C-terminus: Protoheme IX farnesyltransferase (316 aa).

A run of 9 helical transmembrane segments spans residues 28–48 (IIPL…KGQV), 50–70 (PLLL…AQTL), 99–119 (HALI…VFFV), 122–142 (LSGF…THLL), 150–170 (IVIG…AVTG), 178–198 (ILFA…ALMI), 223–243 (IWLY…PLAA), 244–264 (CGVV…KKAW), and 293–313 (AMVI…ASLF).

This sequence belongs to the UbiA prenyltransferase family. Protoheme IX farnesyltransferase subfamily.

The protein resides in the cell inner membrane. It carries out the reaction heme b + (2E,6E)-farnesyl diphosphate + H2O = Fe(II)-heme o + diphosphate. It functions in the pathway porphyrin-containing compound metabolism; heme O biosynthesis; heme O from protoheme: step 1/1. Functionally, converts heme B (protoheme IX) to heme O by substitution of the vinyl group on carbon 2 of heme B porphyrin ring with a hydroxyethyl farnesyl side group. The chain is Protoheme IX farnesyltransferase from Microcystis aeruginosa (strain NIES-843 / IAM M-2473).